Reading from the N-terminus, the 247-residue chain is Uridylate kinase (247 aa).

14–17 (KLSG) contributes to the ATP binding site. The interval 22 to 27 (GERGVG) is involved in allosteric activation by GTP. Residue Gly56 coordinates UMP. Residues Gly57 and Arg61 each contribute to the ATP site. Residues Asp76 and 137–144 (IGSPYFST) contribute to the UMP site. ATP is bound by residues Asn165, Tyr171, and Asp174.

The protein belongs to the UMP kinase family. In terms of assembly, homohexamer.

Its subcellular location is the cytoplasm. The enzyme catalyses UMP + ATP = UDP + ADP. It participates in pyrimidine metabolism; CTP biosynthesis via de novo pathway; UDP from UMP (UMPK route): step 1/1. Its activity is regulated as follows. Allosterically activated by GTP. Inhibited by UTP. Functionally, catalyzes the reversible phosphorylation of UMP to UDP. This chain is Uridylate kinase, found in Streptococcus pneumoniae (strain ATCC BAA-255 / R6).